We begin with the raw amino-acid sequence, 130 residues long: Sulfurtransferase TusD (130 aa).

The active-site Cysteine persulfide intermediate is cysteine 80.

The protein belongs to the DsrE/TusD family. Heterohexamer, formed by a dimer of trimers. The hexameric TusBCD complex contains 2 copies each of TusB, TusC and TusD. The TusBCD complex interacts with TusE.

It localises to the cytoplasm. Functionally, part of a sulfur-relay system required for 2-thiolation of 5-methylaminomethyl-2-thiouridine (mnm(5)s(2)U) at tRNA wobble positions. Accepts sulfur from TusA and transfers it in turn to TusE. This Proteus mirabilis (strain HI4320) protein is Sulfurtransferase TusD.